Consider the following 370-residue polypeptide: Anhydro-N-acetylmuramic acid kinase (370 aa).

13–20 provides a ligand contact to ATP; the sequence is GTSMDGVD.

Belongs to the anhydro-N-acetylmuramic acid kinase family.

It catalyses the reaction 1,6-anhydro-N-acetyl-beta-muramate + ATP + H2O = N-acetyl-D-muramate 6-phosphate + ADP + H(+). It functions in the pathway amino-sugar metabolism; 1,6-anhydro-N-acetylmuramate degradation. It participates in cell wall biogenesis; peptidoglycan recycling. Its function is as follows. Catalyzes the specific phosphorylation of 1,6-anhydro-N-acetylmuramic acid (anhMurNAc) with the simultaneous cleavage of the 1,6-anhydro ring, generating MurNAc-6-P. Is required for the utilization of anhMurNAc either imported from the medium or derived from its own cell wall murein, and thus plays a role in cell wall recycling. The protein is Anhydro-N-acetylmuramic acid kinase of Vibrio parahaemolyticus serotype O3:K6 (strain RIMD 2210633).